The primary structure comprises 493 residues: FAD-linked oxidoreductase tazL (493 aa).

The N-terminal stretch at 1–17 (MRSNTVILAALPLVASA) is a signal peptide. 7 N-linked (GlcNAc...) asparagine glycosylation sites follow: Asn-29, Asn-41, Asn-53, Asn-91, Asn-253, Asn-318, and Asn-387. The FAD-binding PCMH-type domain maps to 63–235 (WAEPTFAVTI…TSATYEIFDA (173 aa)).

This sequence belongs to the oxygen-dependent FAD-linked oxidoreductase family.

It participates in secondary metabolite biosynthesis. Its function is as follows. FAD-linked oxidoreductase; part of the gene cluster that mediates the biosynthesis of azaterrilone A and other azaphilones, a class of fungal metabolites characterized by a highly oxygenated pyrano-quinone bicyclic core and exhibiting a broad range of bioactivities. The first step of the pathway begins with the non-reducing polyketide synthase tazA that assembles one acetyl-CoA starter unit, five malonyl-CoA units, and catalyzes a series of Claisen condensations, methylation, PT-mediated cyclization, and finally releases the first hexaketide precursor through the R-domain. The tazA product then undergoes reduction on its terminal ketone and the following pyran-ring formation by yet undetermined enzyme(s). Dehydration and enoyl reduction, possibly involving the trans-enoyl reductase tazE leads to the next intermediate. TazD is predicted as an acetyltransferase and might catalyze the acetylation steps leading to the synthesis of azaterrilone A. Azaterrilone A is not the final product of the taz pathway and both the highly reducing polyketide synthase tazB and the dual enzyme tazHJ catalyze late steps of the pathway, leading to the production of the 2 final stereoisomers that contain additional polyketide modification whose structures have still to be determined. The sequence is that of FAD-linked oxidoreductase tazL from Aspergillus terreus (strain NIH 2624 / FGSC A1156).